The sequence spans 122 residues: Phosphoribosyl-ATP pyrophosphatase (122 aa).

It belongs to the PRA-PH family.

Its subcellular location is the cytoplasm. It catalyses the reaction 1-(5-phospho-beta-D-ribosyl)-ATP + H2O = 1-(5-phospho-beta-D-ribosyl)-5'-AMP + diphosphate + H(+). The protein operates within amino-acid biosynthesis; L-histidine biosynthesis; L-histidine from 5-phospho-alpha-D-ribose 1-diphosphate: step 2/9. This is Phosphoribosyl-ATP pyrophosphatase from Burkholderia thailandensis (strain ATCC 700388 / DSM 13276 / CCUG 48851 / CIP 106301 / E264).